A 436-amino-acid polypeptide reads, in one-letter code: 3-ketoacyl-CoA thiolase (436 aa).

The Acyl-thioester intermediate role is filled by Cys99. Catalysis depends on proton acceptor residues His392 and Cys422.

It belongs to the thiolase-like superfamily. Thiolase family. Heterotetramer of two alpha chains (FadJ) and two beta chains (FadI).

It is found in the cytoplasm. It carries out the reaction an acyl-CoA + acetyl-CoA = a 3-oxoacyl-CoA + CoA. It functions in the pathway lipid metabolism; fatty acid beta-oxidation. In terms of biological role, catalyzes the final step of fatty acid oxidation in which acetyl-CoA is released and the CoA ester of a fatty acid two carbons shorter is formed. This chain is 3-ketoacyl-CoA thiolase, found in Shigella flexneri.